The following is a 460-amino-acid chain: UDP-N-acetylmuramoylalanine--D-glutamate ligase (460 aa).

115–121 (GTNGKTT) is an ATP binding site.

Belongs to the MurCDEF family.

The protein resides in the cytoplasm. The enzyme catalyses UDP-N-acetyl-alpha-D-muramoyl-L-alanine + D-glutamate + ATP = UDP-N-acetyl-alpha-D-muramoyl-L-alanyl-D-glutamate + ADP + phosphate + H(+). The protein operates within cell wall biogenesis; peptidoglycan biosynthesis. Its function is as follows. Cell wall formation. Catalyzes the addition of glutamate to the nucleotide precursor UDP-N-acetylmuramoyl-L-alanine (UMA). In Salinibacter ruber (strain DSM 13855 / M31), this protein is UDP-N-acetylmuramoylalanine--D-glutamate ligase.